A 51-amino-acid polypeptide reads, in one-letter code: Ovomucoid (51 aa).

The Kazal-like domain maps to 3 to 51 (IDCSGYPKPACTLEFFPLCGSDNQTYSNKCAFCNAAVEKNVTLNHIGEC). Intrachain disulfides connect cysteine 5–cysteine 35, cysteine 13–cysteine 32, and cysteine 21–cysteine 51. An N-linked (GlcNAc...) asparagine glycan is attached at asparagine 42.

It is found in the secreted. The sequence is that of Ovomucoid from Eudromia elegans (Elegant crested-tinamou).